The chain runs to 294 residues: Cytidine deaminase (294 aa).

2 CMP/dCMP-type deaminase domains span residues 48-168 (DEDA…FGPK) and 186-294 (LTGN…VLLG). Residue 89–91 (NME) participates in substrate binding. Histidine 102 is a binding site for Zn(2+). The active-site Proton donor is the glutamate 104. 2 residues coordinate Zn(2+): cysteine 129 and cysteine 132.

This sequence belongs to the cytidine and deoxycytidylate deaminase family. As to quaternary structure, homodimer. The cofactor is Zn(2+).

It catalyses the reaction cytidine + H2O + H(+) = uridine + NH4(+). The catalysed reaction is 2'-deoxycytidine + H2O + H(+) = 2'-deoxyuridine + NH4(+). This enzyme scavenges exogenous and endogenous cytidine and 2'-deoxycytidine for UMP synthesis. This Salmonella typhi protein is Cytidine deaminase.